An 86-amino-acid polypeptide reads, in one-letter code: Large ribosomal subunit protein bL31 (86 aa).

The tract at residues 65–86 is disordered; that stretch reads YGMASSDSSEQKDKSSEEKKES. Positions 73–86 are enriched in basic and acidic residues; the sequence is SEQKDKSSEEKKES.

Belongs to the bacterial ribosomal protein bL31 family. Type A subfamily. As to quaternary structure, part of the 50S ribosomal subunit.

Its function is as follows. Binds the 23S rRNA. The sequence is that of Large ribosomal subunit protein bL31 from Prochlorococcus marinus (strain NATL2A).